Reading from the N-terminus, the 635-residue chain is Threonine--tRNA ligase (635 aa).

A TGS domain is found at 1 to 61; the sequence is MIKITLKDGK…HKDSSLEILT (61 aa). The tract at residues 242-532 is catalytic; that stretch reads DHRKLGKELD…LIEQYAGAFP (291 aa). Residues Cys-333, His-384, and His-509 each contribute to the Zn(2+) site.

Belongs to the class-II aminoacyl-tRNA synthetase family. Homodimer. Requires Zn(2+) as cofactor.

The protein resides in the cytoplasm. It carries out the reaction tRNA(Thr) + L-threonine + ATP = L-threonyl-tRNA(Thr) + AMP + diphosphate + H(+). Its function is as follows. Catalyzes the attachment of threonine to tRNA(Thr) in a two-step reaction: L-threonine is first activated by ATP to form Thr-AMP and then transferred to the acceptor end of tRNA(Thr). Also edits incorrectly charged L-seryl-tRNA(Thr). The protein is Threonine--tRNA ligase of Clostridium botulinum (strain Langeland / NCTC 10281 / Type F).